The following is a 125-amino-acid chain: Large ribosomal subunit protein bL17 (125 aa).

The protein belongs to the bacterial ribosomal protein bL17 family. As to quaternary structure, part of the 50S ribosomal subunit. Contacts protein L32.

The polypeptide is Large ribosomal subunit protein bL17 (Blochmanniella floridana).